A 421-amino-acid chain; its full sequence is Testin (421 aa).

The PET domain occupies 92 to 199; it reads MILTNPVAAK…GDVKLPREMN (108 aa). The tract at residues 133-164 is disordered; sequence EKQPVAGSEGAQYRKKQLAKQLPAHDQDPSKC. Basic and acidic residues predominate over residues 155–164; it reads PAHDQDPSKC. LIM zinc-binding domains are found at residues 234-297, 299-359, and 362-421; these read YSCY…CDSE, PRCA…NHAV, and QGCH…KMMS.

Belongs to the prickle / espinas / testin family. Interacts via LIM domain 1 with ZYX. Interacts (via LIM domain 3) with ENAH and VASP. Interacts with ALKBH4, talin, actin, alpha-actinin, GRIP1 and PXN. Interacts (via LIM domain 2) with ACTL7A (via N-terminus). Heterodimer with ACTL7A; the heterodimer interacts with ENAH to form a heterotrimer.

Its subcellular location is the cytoplasm. The protein localises to the cell junction. It localises to the focal adhesion. Its function is as follows. Scaffold protein that may play a role in cell adhesion, cell spreading and in the reorganization of the actin cytoskeleton. Plays a role in the regulation of cell proliferation. May act as a tumor suppressor. The polypeptide is Testin (TES) (Sus scrofa (Pig)).